The sequence spans 381 residues: MSLNMFWFLPTHGDGHYLGTEEGSRPVDHGYLQQIAQAADRLGYTGVLIPTGRSCEDAWLVAASMIPVTQRLKFLVALRPSVTSPTVAARQAATLDRLSNGRALFNLVTGSDPQELAGDGVFLDHSERYEASAEFTQVWRRLLLGETVNFNGKHIHVRGAKLLFPPIQQPYPPLYFGGSSDVAQELAAEQVDLYLTWGEPPELVKEKIEQVRAKAAAHGHKIRFGIRLHVIVRETNDEAWQAAERLISHLDDETIAKAQAAFARTDSVGQQRMAALHNGKRDNLEISPNLWAGVGLVRGGAGTALVGDGPTVAARINEYAALGIDSFVLSGYPHLEEAYRVGELLFPHLDVAIPEIPQPQPLNPQGEAVANDFIPRKVAQS.

This sequence belongs to the SsuD family. As to quaternary structure, homotetramer.

It catalyses the reaction an alkanesulfonate + FMNH2 + O2 = an aldehyde + FMN + sulfite + H2O + 2 H(+). Its function is as follows. Catalyzes the desulfonation of aliphatic sulfonates. The chain is Alkanesulfonate monooxygenase from Escherichia coli O8 (strain IAI1).